Reading from the N-terminus, the 291-residue chain is Prolyl 4-hydroxylase 5 (291 aa).

Residues 1–22 are Cytoplasmic-facing; the sequence is MASKSKQHLRYQPRKSVSRSTQ. Residues 23–43 traverse the membrane as a helical; Signal-anchor for type II membrane protein segment; the sequence is AFTVLILLLVVILILLGLGIL. Topologically, residues 44–291 are extracellular; the sequence is SLPNANRNSS…KWFHVHEFKV (248 aa). Asn-51 carries an N-linked (GlcNAc...) asparagine glycan. The Fe2OG dioxygenase domain occupies 163 to 286; it reads NGEGLQVLHY…KWSSTKWFHV (124 aa). Fe cation-binding residues include His-181 and Asp-183. Asn-222 is a glycosylation site (N-linked (GlcNAc...) asparagine). A Fe cation-binding site is contributed by His-267. A 2-oxoglutarate-binding site is contributed by Lys-277.

It belongs to the P4HA family. Fe(2+) serves as cofactor. Requires L-ascorbate as cofactor. As to expression, expressed in epidermal root hair cells (trichoblasts).

The protein localises to the endoplasmic reticulum membrane. The protein resides in the golgi apparatus membrane. The catalysed reaction is L-prolyl-[collagen] + 2-oxoglutarate + O2 = trans-4-hydroxy-L-prolyl-[collagen] + succinate + CO2. Catalyzes the post-translational formation of 4-hydroxyproline in -Xaa-Pro-Gly- sequences in proline-rich peptide sequences of plant glycoproteins and other proteins. Hydroxyprolines are important constituent of many plant cell wall glycoproteins such as extensins, hydroxyproline-rich glycoproteins, lectins and arabinogalactan proteins. Possesses high affinity for leucine-rich repeat and proline-rich extensins of root cell walls that are essential for root hair development. Hydroxyprolines define the subsequent O-glycosylation sites by arabinosyltransferases which elongate the O-arabinosides on extensins. This Arabidopsis thaliana (Mouse-ear cress) protein is Prolyl 4-hydroxylase 5.